Here is a 751-residue protein sequence, read N- to C-terminus: Diamine oxidase [copper-containing] (751 aa).

An N-terminal signal peptide occupies residues 1 to 19; the sequence is MPALGWAVAAILMLQTAMA. Asparagine 110 and asparagine 168 each carry an N-linked (GlcNAc...) asparagine glycan. Cysteine 177 and cysteine 181 form a disulfide bridge. The active-site Proton acceptor is the aspartate 373. Cysteine 391 and cysteine 417 are disulfide-bonded. The active-site Schiff-base intermediate with substrate; via topaquinone is the tyrosine 461. Tyrosine 461 bears the 2',4',5'-topaquinone mark. Cu(2+)-binding residues include histidine 510 and histidine 512. Ca(2+) contacts are provided by aspartate 519, leucine 520, and aspartate 521. Asparagine 538 carries an N-linked (GlcNAc...) asparagine glycan. Glutamate 562, phenylalanine 653, asparagine 656, glutamate 658, aspartate 664, and leucine 665 together coordinate Ca(2+). Histidine 675 lines the Cu(2+) pocket. An N-linked (GlcNAc...) asparagine glycan is attached at asparagine 745.

It belongs to the copper/topaquinone oxidase family. In terms of assembly, homodimer; disulfide-linked. Cu(2+) serves as cofactor. Requires Ca(2+) as cofactor. L-topaquinone is required as a cofactor. Post-translationally, N-glycosylated. In terms of processing, topaquinone (TPQ) is generated by copper-dependent autoxidation of a specific tyrosyl residue. In terms of tissue distribution, widely expressed with higher expression in placenta and kidney.

It localises to the secreted. Its subcellular location is the extracellular space. It is found in the cell membrane. The enzyme catalyses histamine + O2 + H2O = imidazole-4-acetaldehyde + H2O2 + NH4(+). It carries out the reaction N(tau)-methylhistamine + O2 + H2O = 1-methylimidazole-4-acetaldehyde + H2O2 + NH4(+). It catalyses the reaction putrescine + O2 + H2O = 4-aminobutanal + H2O2 + NH4(+). The catalysed reaction is cadaverine + O2 + H2O = 5-aminopentanal + H2O2 + NH4(+). Its activity is regulated as follows. Inhibited by amiloride and amiloride analogs. Inhibited by isoniazid, cimetidine, clonidine, berenil and pentamidine. Catalyzes the oxidative deamination of primary amines to the corresponding aldehydes with the concomitant production of hydrogen peroxide and ammonia. Its preferred substrates are the diamines histamine and 1-methylhistamine and it could therefore play a role in allergic and immune responses. Has a broad specificity for diamines and can also act on cadaverine and putrescine, two products of amino acid catabolism. It could also act on polyamines, like spermidine and spermine though less efficiently, and regulate various biological processes. This is Diamine oxidase [copper-containing] from Homo sapiens (Human).